The chain runs to 683 residues: Protein hook (683 aa).

Residues Asn-5 to Ala-123 enclose the Calponin-homology (CH) domain. Coiled coils occupy residues Glu-135–Gly-440 and Gln-484–Val-594.

Belongs to the hook family. Homodimer. Interacts with microtubules via its N-terminus.

The protein localises to the cytoplasm. It localises to the cytoskeleton. It is found in the endosome. Its subcellular location is the synapse. Functionally, involved in endocytic trafficking by stabilizing organelles of the endocytic pathway. Probably acts as a cytoskeletal linker protein required to tether endosome vesicles to the cytoskeleton. Involved in modulation of endocytosis at stages required for down-regulation of membrane proteins that control synapse size. Not involved in synaptic vesicle recycling. Required in R7 cells for boss endocytosis into multivesicular bodies (MVBs). Has a role in regulating adult longevity. This is Protein hook from Drosophila grimshawi (Hawaiian fruit fly).